Here is a 100-residue protein sequence, read N- to C-terminus: Urease subunit gamma (100 aa).

Belongs to the urease gamma subunit family. Heterotrimer of UreA (gamma), UreB (beta) and UreC (alpha) subunits. Three heterotrimers associate to form the active enzyme.

Its subcellular location is the cytoplasm. The catalysed reaction is urea + 2 H2O + H(+) = hydrogencarbonate + 2 NH4(+). It participates in nitrogen metabolism; urea degradation; CO(2) and NH(3) from urea (urease route): step 1/1. In Corynebacterium urealyticum (strain ATCC 43042 / DSM 7109), this protein is Urease subunit gamma.